Reading from the N-terminus, the 392-residue chain is Cyclic AMP receptor 1 (392 aa).

Topologically, residues 1–13 (MGLLDGNPANETS) are extracellular. An N-linked (GlcNAc...) asparagine glycan is attached at N10. Residues 14 to 33 (LVLLLFADFSSMLGCMAVLI) traverse the membrane as a helical segment. The Cytoplasmic segment spans residues 34 to 47 (GFWRLKLLRNHVTK). Residues 48–68 (VIACFCATSFCKDFPSTILTL) form a helical membrane-spanning segment. The Extracellular portion of the chain corresponds to 69–83 (TNTAVNGGFPCYLYA). The chain crosses the membrane as a helical span at residues 84-109 (IVITYGSFACWLWTLCLAISIYMLIV). Topologically, residues 110–120 (KREPEPERFEK) are cytoplasmic. The helical transmembrane segment at 121–139 (YYYLLCWGLPLISTIVMLA) threads the bilayer. Residues 140 to 162 (KNTVQFVGNWCWIGVSFTGYRFG) lie on the Extracellular side of the membrane. A helical transmembrane segment spans residues 163 to 181 (LFYGPFLFIWAISAVLVGL). The Cytoplasmic segment spans residues 182-205 (TSRYTYVVIHNGVSDNKEKHLTYQ). Residues 206-224 (FKLINYIIVFLVCWVFAVV) form a helical membrane-spanning segment. Over 225–235 (NRIVNGLNMFP) the chain is Extracellular. The chain crosses the membrane as a helical span at residues 236–260 (PALNILHTYLSVSHGFWASVTFIYN). Residues 261 to 392 (NPLMWRYFGA…STSTNGQGNN (132 aa)) lie on the Cytoplasmic side of the membrane. Disordered regions lie at residues 292-324 (NKNNNNPSPYSSSRGTSGKTMGGHPTGDDVQCS) and 339-392 (VNNQ…QGNN). Positions 298 to 310 (PSPYSSSRGTSGK) are enriched in polar residues. Residues S299, S302, S303, S304, S308, S360, S361, S362, S363, S364, S366, S367, and S368 each carry the phosphoserine modification. Positions 340–367 (NNQQNLNNNYGLQQNYNDEGSSSSSLSS) are enriched in low complexity. The span at 375-392 (VEMQNIQISTSTNGQGNN) shows a compositional bias: polar residues.

This sequence belongs to the G-protein coupled receptor 5 family. C-terminal Ser or Thr residues may be phosphorylated.

Its subcellular location is the membrane. Functionally, receptor for cAMP. Coordinates the aggregation of individual cells into a multicellular organism and regulates the expression of a large number of developmentally regulated genes. The activity of this receptor is mediated by G proteins. The polypeptide is Cyclic AMP receptor 1 (carA-1) (Dictyostelium discoideum (Social amoeba)).